The chain runs to 448 residues: Exodeoxyribonuclease 7 large subunit (448 aa).

Belongs to the XseA family. As to quaternary structure, heterooligomer composed of large and small subunits.

The protein localises to the cytoplasm. The enzyme catalyses Exonucleolytic cleavage in either 5'- to 3'- or 3'- to 5'-direction to yield nucleoside 5'-phosphates.. In terms of biological role, bidirectionally degrades single-stranded DNA into large acid-insoluble oligonucleotides, which are then degraded further into small acid-soluble oligonucleotides. This chain is Exodeoxyribonuclease 7 large subunit, found in Photobacterium profundum (strain SS9).